The following is a 347-amino-acid chain: Dual specificity mitogen-activated protein kinase kinase 3 (347 aa).

An N-acetylmethionine modification is found at Met1. The span at 1 to 15 shows a compositional bias: low complexity; sequence MESPASSQPASMPQS. A disordered region spans residues 1–46; it reads MESPASSQPASMPQSKGKSKRKKDLRISCMSKPPAPNPTPPRNLDS. 2 positions are modified to phosphoserine: Ser3 and Ser15. The 262-residue stretch at 64–325 folds into the Protein kinase domain; that stretch reads LVTISELGRG…YLELMEHPFF (262 aa). Residues 70–78 and Lys93 contribute to the ATP site; that span reads LGRGAYGVV. The active-site Proton acceptor is Asp190. Ser218 is subject to Phosphoserine. Thr222 carries the post-translational modification Phosphothreonine.

It belongs to the protein kinase superfamily. STE Ser/Thr protein kinase family. MAP kinase kinase subfamily. As to quaternary structure, component of a signaling complex containing at least AKAP13, PKN1, MAPK14, ZAK and MAP2K3. Within this complex, AKAP13 interacts directly with PKN1, which in turn recruits MAPK14, MAP2K3 and ZAK. Binds to DYRK1B/MIRK and increases its kinase activity. Part of a complex with MAP3K3, RAC1 and CCM2. Interacts with ARRB1. (Microbial infection) Interacts with Yersinia YopJ. In terms of processing, autophosphorylated. Phosphorylation on Ser-218 and Thr-222 by MAP kinase kinase kinases positively regulates the kinase activity. Phosphorylated by TAOK2. Post-translationally, (Microbial infection) Yersinia YopJ may acetylate Ser/Thr residues, preventing phosphorylation and activation, thus blocking the MAPK signaling pathway. As to expression, abundant expression is seen in the skeletal muscle. It is also widely expressed in other tissues.

It catalyses the reaction L-seryl-[protein] + ATP = O-phospho-L-seryl-[protein] + ADP + H(+). It carries out the reaction L-threonyl-[protein] + ATP = O-phospho-L-threonyl-[protein] + ADP + H(+). The enzyme catalyses L-tyrosyl-[protein] + ATP = O-phospho-L-tyrosyl-[protein] + ADP + H(+). With respect to regulation, activated by dual phosphorylation on Ser-218 and Thr-222. Functionally, dual specificity kinase. Is activated by cytokines and environmental stress in vivo. Catalyzes the concomitant phosphorylation of a threonine and a tyrosine residue in the MAP kinase p38. Part of a signaling cascade that begins with the activation of the adrenergic receptor ADRA1B and leads to the activation of MAPK14. The polypeptide is Dual specificity mitogen-activated protein kinase kinase 3 (MAP2K3) (Homo sapiens (Human)).